We begin with the raw amino-acid sequence, 195 residues long: ATP-dependent Clp protease proteolytic subunit (195 aa).

Catalysis depends on serine 98, which acts as the Nucleophile. Histidine 123 is an active-site residue.

It belongs to the peptidase S14 family. Fourteen ClpP subunits assemble into 2 heptameric rings which stack back to back to give a disk-like structure with a central cavity, resembling the structure of eukaryotic proteasomes.

The protein resides in the cytoplasm. It catalyses the reaction Hydrolysis of proteins to small peptides in the presence of ATP and magnesium. alpha-casein is the usual test substrate. In the absence of ATP, only oligopeptides shorter than five residues are hydrolyzed (such as succinyl-Leu-Tyr-|-NHMec, and Leu-Tyr-Leu-|-Tyr-Trp, in which cleavage of the -Tyr-|-Leu- and -Tyr-|-Trp bonds also occurs).. Functionally, cleaves peptides in various proteins in a process that requires ATP hydrolysis. Has a chymotrypsin-like activity. Plays a major role in the degradation of misfolded proteins. This is ATP-dependent Clp protease proteolytic subunit from Helicobacter pylori (strain Shi470).